A 424-amino-acid polypeptide reads, in one-letter code: Interleukin-13 receptor subunit alpha-1 (424 aa).

A signal peptide spans 1-25 (MARPALLGELLVLLLWTATVGQVAA). Residues 26–340 (ATEVQPPVTN…QSIGKEQNST (315 aa)) are Extracellular-facing. The region spanning 32-121 (PVTNLSVSVE…VKKCISPPEG (90 aa)) is the Fibronectin type-III 1 domain. N-linked (GlcNAc...) asparagine glycans are attached at residues asparagine 35, asparagine 59, asparagine 103, and asparagine 136. Cysteine 44 and cysteine 93 are oxidised to a cystine. 2 cysteine pairs are disulfide-bonded: cysteine 132/cysteine 142 and cysteine 171/cysteine 183. In terms of domain architecture, Fibronectin type-III 2 spans 224–336 (KPDPPHIKHL…WSEAQSIGKE (113 aa)). N-linked (GlcNAc...) asparagine glycosylation occurs at asparagine 262. The short motif at 324–328 (WSDWS) is the WSXWS motif element. Residue asparagine 338 is glycosylated (N-linked (GlcNAc...) asparagine). A helical membrane pass occupies residues 341–364 (FYTTMLLTIPVFVAVAVIILLFYL). At 365-424 (KRLKIIIFPPIPDPGKIFKEMFGDQNDDTLHWKKYDIYEKQSKEETDSVVLIENLKKAAP) the chain is on the cytoplasmic side. The short motif at 371–379 (IFPPIPDPG) is the Box 1 motif element.

It belongs to the type I cytokine receptor family. Type 5 subfamily. In terms of assembly, interleukin-13 receptor is a complex of IL4R, IL13RA1, and possibly other components. Interacts with TRAF3IP1. Interacts with IL4. As to expression, spleen, liver, thymus, heart, lung, kidney, testis, stomach, brain, skin, and colon; but not skeletal muscle.

It localises to the membrane. Its function is as follows. Binds with low affinity to interleukin-13 (IL13). Together with IL4RA can form a functional receptor for IL13. Also serves as an alternate accessory protein to the common cytokine receptor gamma chain for interleukin-4 (IL4) signaling, but cannot replace the function of IL2RG in allowing enhanced interleukin-2 (IL2) binding activity. This is Interleukin-13 receptor subunit alpha-1 (Il13ra1) from Mus musculus (Mouse).